The following is a 106-amino-acid chain: Large ribosomal subunit protein uL24 (106 aa).

Belongs to the universal ribosomal protein uL24 family. In terms of assembly, part of the 50S ribosomal subunit.

In terms of biological role, one of two assembly initiator proteins, it binds directly to the 5'-end of the 23S rRNA, where it nucleates assembly of the 50S subunit. One of the proteins that surrounds the polypeptide exit tunnel on the outside of the subunit. The sequence is that of Large ribosomal subunit protein uL24 from Syntrophus aciditrophicus (strain SB).